The following is a 123-amino-acid chain: Alpha-ketoglutarate dehydrogenase subunit 4, mitochondrial (123 aa).

A mitochondrion-targeting transit peptide spans 1 to 8 (MIATPIRL).

This sequence belongs to the alpha-ketoglutarate dehydrogenase component 4 family. As to quaternary structure, component of the 2-oxoglutarate dehydrogenase complex (OGDC), also called alpha-ketoglutarate dehydrogenase (KGDH) complex. The copmplex is composed of the catalytic subunits OGDH (2-oxoglutarate dehydrogenase KGD1; also called E1 subunit), DLST (dihydrolipoamide succinyltransferase KGD2; also called E2 subunit) and DLD (dihydrolipoamide dehydrogenase LPD1; also called E3 subunit), and the assembly factor KGD4. Within OGDC, interacts (via N-terminus) with E3 subunit and (via C-terminus) with the complex core formed by E1 and E2 subunits.

Its subcellular location is the mitochondrion. In terms of biological role, molecular adapter that is necessary to a form a stable 2-oxoglutarate dehydrogenase enzyme complex (OGDC). Required for incorporation of the E3 subunit (LPD1) into the E1-E2 core (KGD1-KGD2) of mitochondrial OGDC, and acting as a stability factor for the fully assembled complex. The chain is Alpha-ketoglutarate dehydrogenase subunit 4, mitochondrial from Saccharomyces cerevisiae (strain ATCC 204508 / S288c) (Baker's yeast).